Reading from the N-terminus, the 172-residue chain is Small ribosomal subunit protein uS5 (172 aa).

The S5 DRBM domain maps to 16-79 (LKDRLVAINR…EAAKKNLIRV (64 aa)).

Belongs to the universal ribosomal protein uS5 family. In terms of assembly, part of the 30S ribosomal subunit. Contacts proteins S4 and S8.

Its function is as follows. With S4 and S12 plays an important role in translational accuracy. Functionally, located at the back of the 30S subunit body where it stabilizes the conformation of the head with respect to the body. This is Small ribosomal subunit protein uS5 from Porphyromonas gingivalis (strain ATCC BAA-308 / W83).